Consider the following 253-residue polypeptide: uncharacterized protein (253 aa).

The interval 211 to 235 is disordered; that stretch reads DEPEPAQPTLTVPSAQPVSNRRGKP. A compositionally biased stretch (polar residues) spans 218 to 229; that stretch reads PTLTVPSAQPVS.

This is an uncharacterized protein from Mycobacterium tuberculosis (strain CDC 1551 / Oshkosh).